The following is a 493-amino-acid chain: Beta-hexosaminidase Amuc_2018 (493 aa).

The signal sequence occupies residues M1–A21. R122 serves as a coordination point for substrate. Active-site charge relay system residues include D151 and H214. Residues C227 and C247 each coordinate Zn(2+). D278 serves as a coordination point for substrate. Residue E279 is the Charge relay system of the active site. The Zn(2+) site is built by C288 and C291. Substrate contacts are provided by residues W345, Y373–D375, and W421–E423.

This sequence belongs to the glycosyl hydrolase 20 family.

The catalysed reaction is Hydrolysis of terminal non-reducing N-acetyl-D-hexosamine residues in N-acetyl-beta-D-hexosaminides.. With respect to regulation, significantly inhibited by the addition of sodium dodecyl sulfate (SDS), but not by EDTA, urea, 2-mercaptoethanol or Triton X-100. Strongly inhibited by Cu2(+) ions, in case of which the activity is decreased by 70%. No significant inhibition with Al(3+), Fe(3+), Ca(2+), Cd(2+), Mg(2+), Mn(2+), Ni(2+) and Zn(2+) ions. Strongly inhibited by PugNAc (O-(2-acetamido-2-deoxy-D-glucopyranosylideneamino) N-phenylcarbamate) in the sub-micromolar concentration range. PugNAc at a concentration of 0.5 mM decreases the activity by 50% and the addition of 1 mM PugNAc fully inhibits the enzyme. No significant reduction in the activity by alkylation using N-ethylmaleimide or 2-iodoacetamide. Hydrolyzes terminal GlcNAc residues from terminally unbranched N-glycans and from chitobiose. Hydrolyzes beta-1,6-linked N-acetylglucosamine and beta-1,4-linked N-acetylgalactosamine from pNP-alpha-GalNAc[beta1,3Gal]beta1,6GlcNAc and pNP-beta-GlcNAc-beta1,4-GalNAc substrates, respectively, as well as beta-1,2-linked N-acetylglucosamine units from the non-reducing end of N-glycans. Hydrolyzes GlcNAc residues linked to alpha1,3- or alpha1,6-mannose branch, but has low activity on substrates with more than one GlcNAc residue on one of the mannose branches. Releases terminal GlcNAc moieties from the N-glycopeptide Gly-Glu-Asn-(GlcNAc2Man3GlcNAc2)-Arg with high efficiency. Has moderate hydrolytic activity on the chitobiose moiety of N-glycopeptide substrate Gly-Glu-Asn-(GlcNAc2)-Arg. Does not hydrolyze GlcNAc residues from N-glycan structures bearing a bisecting GlcNAc moiety (beta1,4-linked GlcNAc to the beta1,4-linked core mannose). Potentially capable of cleaving the specific glycoside linkages in the process of mucin degradation in human intestinal tract. Hydrolyzes synthetic substrate pNP-beta-GlcNAc with high activity and pNP-beta-GalNAc to a lesser extent. Does not hydrolyze pNP-beta-glucose, pNP-beta-galactose, pNP-alpha-glucose, pNP-alpha-galactose, pNP-alpha-GlcNAc or pNP-alpha-fucose. In Akkermansia muciniphila (strain ATCC BAA-835 / DSM 22959 / JCM 33894 / BCRC 81048 / CCUG 64013 / CIP 107961 / Muc), this protein is Beta-hexosaminidase Amuc_2018.